Reading from the N-terminus, the 402-residue chain is Flavohemoprotein (402 aa).

The Globin domain occupies 1–136 (MLSEKTIEIV…IADAFISIEA (136 aa)). His85 serves as a coordination point for heme b. Active-site charge relay system residues include Tyr95 and Glu135. The interval 147–402 (GGWKDFRNFV…EFFGPAASLQ (256 aa)) is reductase. The FAD-binding FR-type domain maps to 150–260 (KDFRNFVVVK…SAPAGDFVLN (111 aa)). FAD-binding positions include Tyr188 and 204-207 (RQYS). Residue 273 to 278 (GVGITP) participates in NADP(+) binding. Residue 394 to 397 (FFGP) participates in FAD binding.

The protein belongs to the globin family. Two-domain flavohemoproteins subfamily. It in the C-terminal section; belongs to the flavoprotein pyridine nucleotide cytochrome reductase family. It depends on heme b as a cofactor. FAD serves as cofactor.

It carries out the reaction 2 nitric oxide + NADPH + 2 O2 = 2 nitrate + NADP(+) + H(+). The enzyme catalyses 2 nitric oxide + NADH + 2 O2 = 2 nitrate + NAD(+) + H(+). Is involved in NO detoxification in an aerobic process, termed nitric oxide dioxygenase (NOD) reaction that utilizes O(2) and NAD(P)H to convert NO to nitrate, which protects the bacterium from various noxious nitrogen compounds. Therefore, plays a central role in the inducible response to nitrosative stress. In Bacillus thuringiensis subsp. konkukian (strain 97-27), this protein is Flavohemoprotein.